The chain runs to 576 residues: Sulfite reductase [NADPH] hemoprotein beta-component (576 aa).

[4Fe-4S] cluster contacts are provided by Cys439, Cys445, Cys485, and Cys489. Residue Cys489 coordinates siroheme.

It belongs to the nitrite and sulfite reductase 4Fe-4S domain family. Alpha(8)-beta(8). The alpha component is a flavoprotein, the beta component is a hemoprotein. Siroheme serves as cofactor. [4Fe-4S] cluster is required as a cofactor.

It carries out the reaction hydrogen sulfide + 3 NADP(+) + 3 H2O = sulfite + 3 NADPH + 4 H(+). The protein operates within sulfur metabolism; hydrogen sulfide biosynthesis; hydrogen sulfide from sulfite (NADPH route): step 1/1. Functionally, component of the sulfite reductase complex that catalyzes the 6-electron reduction of sulfite to sulfide. This is one of several activities required for the biosynthesis of L-cysteine from sulfate. The polypeptide is Sulfite reductase [NADPH] hemoprotein beta-component (Aliivibrio salmonicida (strain LFI1238) (Vibrio salmonicida (strain LFI1238))).